Consider the following 457-residue polypeptide: Streptogrisin-C (457 aa).

The tat-type signal signal peptide spans 1 to 34 (MERTTLRRRALVAGTATVAVGALALAGLTGVASA). A propeptide spanning residues 35–202 (DPAATAAPPV…ARSAEQPRAL (168 aa)) is cleaved from the precursor. The interval 203–393 (ADIRGGDAYY…QAYGLTLVTS (191 aa)) is catalytic. A disulfide bond links Cys219 and Cys239. Catalysis depends on charge relay system residues His238 and Asp266. 2 disulfides stabilise this stretch: Cys305/Cys315 and Cys341/Cys368. Residue Ser347 is the Charge relay system of the active site. Positions 393–412 (SGGGTPTDPPTTPPTDSPGG) are disordered. The linker stretch occupies residues 394-413 (GGGTPTDPPTTPPTDSPGGT). The segment covering 399 to 408 (TDPPTTPPTD) has biased composition (pro residues). Residues 415–457 (AVGTAYAAGATVTYGGATYRCLQAHTAQPGWTPADVPALWQRV) form the Chitin-binding type-3 domain.

The protein belongs to the peptidase S1 family. Monomer. Post-translationally, predicted to be exported by the Tat system. The position of the signal peptide cleavage has not been experimentally proven.

Hydrolysis of proteins with specificity similar to chymotrypsin. May be specialized for the degradation of chitin-linked proteins. Has a primary specificity for large aliphatic or aromatic amino acids. This chain is Streptogrisin-C (sprC), found in Streptomyces griseus.